The sequence spans 321 residues: Lipoyl synthase (321 aa).

Residues Cys-68, Cys-73, Cys-79, Cys-94, Cys-98, Cys-101, and Ser-308 each coordinate [4Fe-4S] cluster. A Radical SAM core domain is found at 80-297 (FNHGTATFMI…KQEALAMGFT (218 aa)).

This sequence belongs to the radical SAM superfamily. Lipoyl synthase family. [4Fe-4S] cluster is required as a cofactor.

It localises to the cytoplasm. It catalyses the reaction [[Fe-S] cluster scaffold protein carrying a second [4Fe-4S](2+) cluster] + N(6)-octanoyl-L-lysyl-[protein] + 2 oxidized [2Fe-2S]-[ferredoxin] + 2 S-adenosyl-L-methionine + 4 H(+) = [[Fe-S] cluster scaffold protein] + N(6)-[(R)-dihydrolipoyl]-L-lysyl-[protein] + 4 Fe(3+) + 2 hydrogen sulfide + 2 5'-deoxyadenosine + 2 L-methionine + 2 reduced [2Fe-2S]-[ferredoxin]. The protein operates within protein modification; protein lipoylation via endogenous pathway; protein N(6)-(lipoyl)lysine from octanoyl-[acyl-carrier-protein]: step 2/2. Its function is as follows. Catalyzes the radical-mediated insertion of two sulfur atoms into the C-6 and C-8 positions of the octanoyl moiety bound to the lipoyl domains of lipoate-dependent enzymes, thereby converting the octanoylated domains into lipoylated derivatives. This Sodalis glossinidius (strain morsitans) protein is Lipoyl synthase.